The following is a 145-amino-acid chain: MNQEVGSIMGYLYKLYPVQVYEEEIPQDFAVPSLYFPPASTVDGVDTVSTFQKAYVLNVKLFHENVQKAHNEAERIADTLRSRRGIIPLIQESGEDTGDFIRLSRIETRVSDDYATIVLNWTSRYWYEREDQRSIDGFKFKSGVK.

The protein to B.subtilis XkdJ.

This is an uncharacterized protein from Bacillus subtilis (strain 168).